A 351-amino-acid polypeptide reads, in one-letter code: Uroporphyrinogen decarboxylase (351 aa).

Residues 26-30 (RQAGR), Phe-45, Asp-76, Tyr-153, Ser-208, and His-323 each bind substrate.

The protein belongs to the uroporphyrinogen decarboxylase family. Homodimer.

Its subcellular location is the cytoplasm. The enzyme catalyses uroporphyrinogen III + 4 H(+) = coproporphyrinogen III + 4 CO2. Its pathway is porphyrin-containing compound metabolism; protoporphyrin-IX biosynthesis; coproporphyrinogen-III from 5-aminolevulinate: step 4/4. Its function is as follows. Catalyzes the decarboxylation of four acetate groups of uroporphyrinogen-III to yield coproporphyrinogen-III. This Prochlorococcus marinus (strain SARG / CCMP1375 / SS120) protein is Uroporphyrinogen decarboxylase.